Reading from the N-terminus, the 464-residue chain is Glutamate--tRNA ligase (464 aa).

Positions 11 to 21 match the 'HIGH' region motif; that stretch reads PSPTGFIHLGN. The short motif at 243-247 is the 'KMSKS' region element; the sequence is KMSKR. Lys246 contacts ATP.

It belongs to the class-I aminoacyl-tRNA synthetase family. Glutamate--tRNA ligase type 1 subfamily. In terms of assembly, monomer.

It localises to the cytoplasm. It carries out the reaction tRNA(Glu) + L-glutamate + ATP = L-glutamyl-tRNA(Glu) + AMP + diphosphate. Its function is as follows. Catalyzes the attachment of glutamate to tRNA(Glu) in a two-step reaction: glutamate is first activated by ATP to form Glu-AMP and then transferred to the acceptor end of tRNA(Glu). The chain is Glutamate--tRNA ligase from Polaromonas naphthalenivorans (strain CJ2).